A 273-amino-acid polypeptide reads, in one-letter code: Bis(5'-nucleosyl)-tetraphosphatase, symmetrical (273 aa).

Belongs to the Ap4A hydrolase family.

It carries out the reaction P(1),P(4)-bis(5'-adenosyl) tetraphosphate + H2O = 2 ADP + 2 H(+). Hydrolyzes diadenosine 5',5'''-P1,P4-tetraphosphate to yield ADP. The protein is Bis(5'-nucleosyl)-tetraphosphatase, symmetrical of Aeromonas hydrophila subsp. hydrophila (strain ATCC 7966 / DSM 30187 / BCRC 13018 / CCUG 14551 / JCM 1027 / KCTC 2358 / NCIMB 9240 / NCTC 8049).